Consider the following 97-residue polypeptide: uncharacterized protein (97 aa).

This is an uncharacterized protein from Methanothermococcus thermolithotrophicus (Methanococcus thermolithotrophicus).